The primary structure comprises 318 residues: Receptor homology region, transmembrane domain- and RING domain-containing protein 6 (318 aa).

An N-terminal signal peptide occupies residues 1–20; that stretch reads MNGSWITILSLLVISQLASS. Topologically, residues 22–162 are lumenal; sequence VTLIGKNTFL…LIPGFGISSW (141 aa). Cys62 and Cys87 are oxidised to a cystine. Residues 70–143 form the PA domain; sequence EKGSKFRPSY…RTSGEVLKEY (74 aa). N-linked (GlcNAc...) asparagine glycosylation is present at Asn121. The chain crosses the membrane as a helical span at residues 163 to 183; the sequence is SIMAITFVSLLVISAVLASYF. Topologically, residues 184-318 are cytoplasmic; that stretch reads SVRRHRIRQH…DLPIVVRVYL (135 aa). An RING-type; atypical zinc finger spans residues 233-275; that stretch reads CAICIDDYRVGEILRILPCKHKYHAVCIDSWLGRCRSFCPVCK.

The protein localises to the prevacuolar compartment membrane. The protein resides in the protein storage vacuole membrane. In terms of biological role, involved in the trafficking of vacuolar proteins. May function as a sorting receptor for protein trafficking to the protein storage vacuole (PSV). This chain is Receptor homology region, transmembrane domain- and RING domain-containing protein 6 (RMR6), found in Arabidopsis thaliana (Mouse-ear cress).